A 364-amino-acid polypeptide reads, in one-letter code: Dihydroorotate dehydrogenase (quinone) (364 aa).

FMN contacts are provided by residues 62–66 and Thr86; that span reads AGFDK. Residue Lys66 participates in substrate binding. Residue 111–115 participates in substrate binding; sequence NRMGF. Residues Asn142 and Asn175 each coordinate FMN. Asn175 provides a ligand contact to substrate. The active-site Nucleophile is Ser178. Asn180 is a binding site for substrate. Positions 216 and 244 each coordinate FMN. 245-246 provides a ligand contact to substrate; that stretch reads NT. Residues Gly267, Gly296, and 317–318 each bind FMN; that span reads YT.

Belongs to the dihydroorotate dehydrogenase family. Type 2 subfamily. In terms of assembly, monomer. The cofactor is FMN.

The protein localises to the cell membrane. The enzyme catalyses (S)-dihydroorotate + a quinone = orotate + a quinol. It functions in the pathway pyrimidine metabolism; UMP biosynthesis via de novo pathway; orotate from (S)-dihydroorotate (quinone route): step 1/1. In terms of biological role, catalyzes the conversion of dihydroorotate to orotate with quinone as electron acceptor. This Anaeromyxobacter dehalogenans (strain 2CP-C) protein is Dihydroorotate dehydrogenase (quinone).